The chain runs to 501 residues: ATP synthase subunit alpha (501 aa).

169–176 (GDRQTGKT) provides a ligand contact to ATP.

This sequence belongs to the ATPase alpha/beta chains family. F-type ATPases have 2 components, CF(1) - the catalytic core - and CF(0) - the membrane proton channel. CF(1) has five subunits: alpha(3), beta(3), gamma(1), delta(1), epsilon(1). CF(0) has three main subunits: a(1), b(2) and c(9-12). The alpha and beta chains form an alternating ring which encloses part of the gamma chain. CF(1) is attached to CF(0) by a central stalk formed by the gamma and epsilon chains, while a peripheral stalk is formed by the delta and b chains.

The protein resides in the cell membrane. The enzyme catalyses ATP + H2O + 4 H(+)(in) = ADP + phosphate + 5 H(+)(out). Its function is as follows. Produces ATP from ADP in the presence of a proton gradient across the membrane. The alpha chain is a regulatory subunit. The protein is ATP synthase subunit alpha of Streptococcus agalactiae serotype Ia (strain ATCC 27591 / A909 / CDC SS700).